The chain runs to 430 residues: Aspartate aminotransferase, mitochondrial (430 aa).

A mitochondrion-targeting transit peptide spans 1 to 29; it reads MALLHSSRILSGMAAAFHPGLAAAASARA. Phosphothreonine is present on Thr48. Lys59 is subject to N6-acetyllysine. Substrate is bound at residue Gly65. Lys73 carries the post-translational modification N6-acetyllysine; alternate. Lys73 carries the N6-succinyllysine; alternate modification. Lys82 bears the N6-acetyllysine mark. Lys90 is modified (N6-acetyllysine; alternate). Residue Lys90 is modified to N6-succinyllysine; alternate. Position 96 is a 3'-nitrotyrosine; alternate (Tyr96). Tyr96 carries the phosphotyrosine; alternate modification. Residues Lys107 and Lys122 each carry the N6-acetyllysine; alternate modification. 2 positions are modified to N6-succinyllysine; alternate: Lys107 and Lys122. Ser143 is modified (phosphoserine). Lys159 is subject to N6-acetyllysine; alternate. Lys159 bears the N6-succinyllysine; alternate mark. Trp162 provides a ligand contact to substrate. N6-acetyllysine; alternate is present on Lys185. Position 185 is an N6-succinyllysine; alternate (Lys185). Asn215 serves as a coordination point for substrate. The residue at position 227 (Lys227) is an N6-succinyllysine. Lys234 bears the N6-acetyllysine mark. Residues Lys279 and Lys296 each carry the N6-acetyllysine; alternate modification. Lys279 carries the N6-(pyridoxal phosphate)lysine; alternate modification. Lys296 carries the N6-succinyllysine; alternate modification. At Lys302 the chain carries N6-acetyllysine. Position 309 is an N6-acetyllysine; alternate (Lys309). Lys309 bears the N6-succinyllysine; alternate mark. Arg313 carries the post-translational modification Asymmetric dimethylarginine. The residue at position 338 (Lys338) is an N6-acetyllysine; alternate. Lys338 is modified (N6-succinyllysine; alternate). Lys345 carries the post-translational modification N6-acetyllysine. N6-acetyllysine; alternate is present on Lys363. Residue Lys363 is modified to N6-succinyllysine; alternate. N6-acetyllysine occurs at positions 364 and 387. N6-acetyllysine; alternate is present on residues Lys396 and Lys404. N6-succinyllysine; alternate is present on residues Lys396 and Lys404. Arg407 is a binding site for substrate.

It belongs to the class-I pyridoxal-phosphate-dependent aminotransferase family. As to quaternary structure, homodimer. The cofactor is pyridoxal 5'-phosphate. Post-translationally, acetylation of Lys-296, Lys-345 and Lys-363 is observed in liver mitochondria from fasted mice but not from fed mice. Detected in brain (at protein level).

The protein resides in the mitochondrion matrix. It localises to the cell membrane. It carries out the reaction L-aspartate + 2-oxoglutarate = oxaloacetate + L-glutamate. It catalyses the reaction L-kynurenine + 2-oxoglutarate = kynurenate + L-glutamate + H2O. Functionally, catalyzes the irreversible transamination of the L-tryptophan metabolite L-kynurenine to form kynurenic acid (KA). As a member of the malate-aspartate shuttle, it has a key role in the intracellular NAD(H) redox balance. Is important for metabolite exchange between mitochondria and cytosol, and for amino acid metabolism. Facilitates cellular uptake of long-chain free fatty acids. This is Aspartate aminotransferase, mitochondrial (Got2) from Mus musculus (Mouse).